We begin with the raw amino-acid sequence, 292 residues long: Poly(U)-specific endoribonuclease-B (292 aa).

An EndoU domain is found at 8–285 (VNHELSKLFN…IGTAYPALLS (278 aa)). Active-site residues include His-162, His-178, and Lys-224.

It belongs to the ENDOU family. As to quaternary structure, monomer. Mn(2+) is required as a cofactor.

Its subcellular location is the nucleus. The enzyme catalyses uridylyl-uridylyl-ribonucleotide-RNA = a 3'-end uridylyl-2',3'-cyclophospho-uridine-RNA + a 5'-end dephospho-ribonucleoside-RNA. Poly(U)-specific endoribonuclease involved in the processing of intron-encoded box C/D snoRNAs, such as U16 and U86. Releases products that have 2',3'-cyclic phosphate termini at the 3'-end. This chain is Poly(U)-specific endoribonuclease-B (endou-b), found in Xenopus laevis (African clawed frog).